The sequence spans 300 residues: AAATGSGTTLKGATVPLNISYEGGKYVLRDLSKPTGTQIITYDLQNRQSRLPGTLVSSTTKTFTSSSQRAAVDAHYNLGKVYDYFYSNFKRNSYDNKGSKIVSSVHYGTQYNNAAWTGDQMIYGDGDGSFFSPLSGSLDVTAHEMTHGVTQETANLIYENQPGALNESFSDVFGYFNDTEDWDIGEDITVSQPALRSLSNPTKYNQPDNYANYRNLPNTDEGDYGGVHTNSGIPNKAAYNTITKLGVSKSQQIYYRALTTYLTPSSTFKDAKAALIQSARDLYGSTDAAKVEAAWNAVGL.

Asp-139 provides a ligand contact to Ca(2+). His-143 contributes to the Zn(2+) binding site. Residue Glu-144 is part of the active site. His-147 and Glu-167 together coordinate Zn(2+). 4 residues coordinate Ca(2+): Asp-178, Asp-181, Asp-183, and Glu-186. His-228 serves as the catalytic Proton donor.

This sequence belongs to the peptidase M4 family. It depends on Ca(2+) as a cofactor. Zn(2+) serves as cofactor.

The protein localises to the secreted. The enzyme catalyses Similar, but not identical, to that of thermolysin.. Functionally, extracellular zinc metalloprotease. This Bacillus pumilus (Bacillus mesentericus) protein is Neutral protease NprE (nprE).